Reading from the N-terminus, the 223-residue chain is Deoxyribose-phosphate aldolase (223 aa).

Aspartate 91 functions as the Proton donor/acceptor in the catalytic mechanism. Residue lysine 154 is the Schiff-base intermediate with acetaldehyde of the active site. The active-site Proton donor/acceptor is lysine 183.

Belongs to the DeoC/FbaB aldolase family. DeoC type 1 subfamily.

The protein resides in the cytoplasm. It catalyses the reaction 2-deoxy-D-ribose 5-phosphate = D-glyceraldehyde 3-phosphate + acetaldehyde. It functions in the pathway carbohydrate degradation; 2-deoxy-D-ribose 1-phosphate degradation; D-glyceraldehyde 3-phosphate and acetaldehyde from 2-deoxy-alpha-D-ribose 1-phosphate: step 2/2. Functionally, catalyzes a reversible aldol reaction between acetaldehyde and D-glyceraldehyde 3-phosphate to generate 2-deoxy-D-ribose 5-phosphate. The sequence is that of Deoxyribose-phosphate aldolase from Geobacillus thermodenitrificans (strain NG80-2).